Here is a 298-residue protein sequence, read N- to C-terminus: Small ribosomal subunit protein uS3m (298 aa).

The protein belongs to the universal ribosomal protein uS3 family.

Its subcellular location is the mitochondrion. The chain is Small ribosomal subunit protein uS3m (RPS3) from Acanthamoeba castellanii (Amoeba).